The sequence spans 355 residues: Methylthioribose-1-phosphate isomerase (355 aa).

Substrate-binding positions include 53-55 (RGA), R96, and Q205. D246 (proton donor) is an active-site residue. Residue 256-257 (NK) coordinates substrate.

The protein belongs to the eIF-2B alpha/beta/delta subunits family. MtnA subfamily.

The enzyme catalyses 5-(methylsulfanyl)-alpha-D-ribose 1-phosphate = 5-(methylsulfanyl)-D-ribulose 1-phosphate. The protein operates within amino-acid biosynthesis; L-methionine biosynthesis via salvage pathway; L-methionine from S-methyl-5-thio-alpha-D-ribose 1-phosphate: step 1/6. Catalyzes the interconversion of methylthioribose-1-phosphate (MTR-1-P) into methylthioribulose-1-phosphate (MTRu-1-P). This Thermosynechococcus vestitus (strain NIES-2133 / IAM M-273 / BP-1) protein is Methylthioribose-1-phosphate isomerase.